A 251-amino-acid chain; its full sequence is Putative glutamine amidotransferase YLR126C (251 aa).

The Glutamine amidotransferase type-1 domain occupies 48 to 232 (EVFHVQKNVF…NRYERQCQEL (185 aa)). Residues Cys-112, His-198, and Glu-200 each act as for GATase activity in the active site.

Its subcellular location is the cytoplasm. May have a role in copper and iron homeostasis. The chain is Putative glutamine amidotransferase YLR126C from Saccharomyces cerevisiae (strain ATCC 204508 / S288c) (Baker's yeast).